Reading from the N-terminus, the 313-residue chain is Porphobilinogen deaminase (313 aa).

Cys242 bears the S-(dipyrrolylmethanemethyl)cysteine mark.

Belongs to the HMBS family. In terms of assembly, monomer. The cofactor is dipyrromethane.

The catalysed reaction is 4 porphobilinogen + H2O = hydroxymethylbilane + 4 NH4(+). It participates in porphyrin-containing compound metabolism; protoporphyrin-IX biosynthesis; coproporphyrinogen-III from 5-aminolevulinate: step 2/4. In terms of biological role, tetrapolymerization of the monopyrrole PBG into the hydroxymethylbilane pre-uroporphyrinogen in several discrete steps. This chain is Porphobilinogen deaminase, found in Photorhabdus laumondii subsp. laumondii (strain DSM 15139 / CIP 105565 / TT01) (Photorhabdus luminescens subsp. laumondii).